The chain runs to 325 residues: Probable WRKY transcription factor 11 (325 aa).

A DNA-binding region (WRKY) is located at residues 240 to 306 (KIADIPPDEY…YEGEHRHNQS (67 aa)).

It belongs to the WRKY group II-d family. As to expression, in young, mature and senescent leaves.

It is found in the nucleus. Functionally, transcription factor. Interacts specifically with the W box (5'-(T)TGAC[CT]-3'), a frequently occurring elicitor-responsive cis-acting element. Regulates rhizobacterium B.cereus AR156-induced systemic resistance (ISR) to P.syringae pv. tomato DC3000, probably by activating the jasmonic acid (JA)- signaling pathway. The sequence is that of Probable WRKY transcription factor 11 (WRKY11) from Arabidopsis thaliana (Mouse-ear cress).